We begin with the raw amino-acid sequence, 238 residues long: 7-cyano-7-deazaguanine synthase (238 aa).

Position 10–20 (10–20) interacts with ATP; it reads LSGGLDSSTVL. Zn(2+)-binding residues include cysteine 190, cysteine 198, cysteine 201, and cysteine 204.

This sequence belongs to the QueC family. Zn(2+) serves as cofactor.

It carries out the reaction 7-carboxy-7-deazaguanine + NH4(+) + ATP = 7-cyano-7-deazaguanine + ADP + phosphate + H2O + H(+). Its pathway is purine metabolism; 7-cyano-7-deazaguanine biosynthesis. Its function is as follows. Catalyzes the ATP-dependent conversion of 7-carboxy-7-deazaguanine (CDG) to 7-cyano-7-deazaguanine (preQ(0)). This Thermoplasma acidophilum (strain ATCC 25905 / DSM 1728 / JCM 9062 / NBRC 15155 / AMRC-C165) protein is 7-cyano-7-deazaguanine synthase.